Consider the following 147-residue polypeptide: Hemoglobin subunit beta (147 aa).

Valine 2 carries the N-acetylvaline modification. One can recognise a Globin domain in the interval 3 to 147 (HLTAEEKAAV…VATALAHKYH (145 aa)). A Phosphothreonine modification is found at threonine 13. At serine 45 the chain carries Phosphoserine. Lysine 60 bears the N6-acetyllysine mark. Histidine 64 lines the heme b pocket. Position 83 is an N6-acetyllysine (lysine 83). Histidine 93 is a heme b binding site. S-nitrosocysteine is present on cysteine 94. N6-acetyllysine is present on lysine 145.

It belongs to the globin family. Heterotetramer of two alpha chains and two beta chains. Red blood cells.

In terms of biological role, involved in oxygen transport from the lung to the various peripheral tissues. The protein is Hemoglobin subunit beta (HBB) of Carlito syrichta (Philippine tarsier).